A 139-amino-acid polypeptide reads, in one-letter code: Large-conductance mechanosensitive channel (139 aa).

2 helical membrane-spanning segments follow: residues 16-36 (VIDLAVGVIIGAAFNGIVKSL) and 79-99 (GAFVNTVIQFFIVATVVFLLV).

Belongs to the MscL family. As to quaternary structure, homopentamer.

It is found in the cell inner membrane. Channel that opens in response to stretch forces in the membrane lipid bilayer. May participate in the regulation of osmotic pressure changes within the cell. The polypeptide is Large-conductance mechanosensitive channel (Caulobacter vibrioides (strain ATCC 19089 / CIP 103742 / CB 15) (Caulobacter crescentus)).